The chain runs to 477 residues: MSEIIESTVAFLIGLLKASWTRTAWHFAVLSFVYVIARSIYRVWFHPLSSYPGPKLAALTQLWYARHWMGGRYPFAIEEAHRRYGEVVRIAPNELSFNTAQSFNEIYGHTTKDHKPFIKGTFYEHYQPEPGIVAERNPEKHRETRKLLAHGFSARALKAQESIIAQYSDLFLAQVKKLAKSHFWIDTIHDAGILVTLFEIGRRLPLLWPLILFSLPNGIKKKFDLFLKYSRDLVRTRVARQNTLTREDFFARLLADKSHSQSEEWLLAQANVLVIAGSDTTATALTTLIYYLAAHQDKLWHLQQELRETFDEASDMTSEKLQGMLYLNAVIEEGLRICPPTAFGLPRISPGAMVDGRLIPKGTVVSTSSWTTAHREDYFHDARGFHPERWLPAGHALWNAKFQHDHLSASKPFSLGPRGCLGVNLAYMEMRITLAKLAWKFDWELVNADQLDWESELRFEGFWKLPVPRVRFYCIHV.

Residues 24-41 form a helical membrane-spanning segment; the sequence is AWHFAVLSFVYVIARSIY. Residue cysteine 420 coordinates heme.

Belongs to the cytochrome P450 family. Requires heme as cofactor.

It is found in the membrane. The protein operates within secondary metabolite biosynthesis. Cytochrome P450 monooxygenase; part of the gene cluster that mediates the biosynthesis of oxaleimides, cytotoxic compounds containing an unusual disubstituted succinimide moiety. The first step of the pathway is provided by the HR-PKS poxF that serves in a new mode of collaborative biosynthesis with the PKS-NRPS poxE, by providing the olefin containing amino acid substrate via the synthesis of an ACP-bound dec-4-enoate. The cytochrome P450 monooxygenase poxM-catalyzed oxidation at the alpha-position creates the enzyme-bound 2-hydroxydec-4-enoyl-ACP thioester, which may be prone to spontaneous hydrolysis to yield 2-hydroxydec-4-enoic acid due to increased electrophilicity of the carbonyl. 2-hydroxydec-4-enoic acid can then be further oxidized by poxM to yield the alpha-ketoacid 2-oxodec-4-enoicacid, which is reductively aminated by the aminotransferase poxL to yield (S,E)-2-aminodec-4-enoic acid. The Hybrid PKS-NRPS synthetase poxE then performs condensation between the octaketide product of its PKS modules and the amino group of (S,E)-2-aminodec-4-enoic acid which is activated and incorporated by the adenylation domain. The resulting aminoacyl product can be cyclized by the Diels-Alderase PoxQ and reductively released by the reductive (R) domain of poxE to yield an aldehyde intermediate. The released aldehyde is then substrate for a Knoevenagel condensation by the hydrolyase poxO followed by an oxidation at the 5-position of the pyrrolidone ring. The presence of the olefin from the amino acid building block allows for migration of the substituted allyl group to occur. This allylic transposition reaction takes place in a conjugate addition, semipinacol-like fashion to yield a succinimide intermediate. Iterative two-electron oxidations of the C7 methyl of the succinimide intermediate to the carboxylic acid can be catalyzed by one of two remaining cytochrome P450 monooxygenasess poxC or poxD to yield oxaleimide A. Subsequent oxidation yields the maleimide scaffold oxaleimide I. Both oxaleimide A and oxaleimide I can undergo oxidative modifications in the decalin ring to yield the series of products oxaleimides B to H. In Penicillium oxalicum (strain 114-2 / CGMCC 5302) (Penicillium decumbens), this protein is Cytochrome P450 monooxygenase poxC.